A 292-amino-acid chain; its full sequence is NADH-cytochrome b5 reductase 1 (292 aa).

Residues 12–32 (ALLVVGTAIFAVLVGAKFLGG) traverse the membrane as a helical segment. The FAD-binding FR-type domain occupies 43–148 (TEFQNFVLKE…RGPKGAMVYT (106 aa)). Residues 128–143 (TTLK…GPKG) and 154–191 (HIGM…QVDL) contribute to the FAD site.

The protein belongs to the flavoprotein pyridine nucleotide cytochrome reductase family. In terms of assembly, monomer. Component of the 2-(3-amino-3-carboxypropyl)histidine synthase complex composed of dph1, dph2, dph3 and a NADH-dependent reductase, predominantly cbr1. FAD serves as cofactor.

It is found in the mitochondrion outer membrane. It catalyses the reaction 2 Fe(III)-[cytochrome b5] + NADH = 2 Fe(II)-[cytochrome b5] + NAD(+) + H(+). It carries out the reaction 2 Fe(3+)-[Dph3] + NADH = 2 Fe(2+)-[Dph3] + NAD(+) + H(+). It functions in the pathway protein modification; peptidyl-diphthamide biosynthesis. Its function is as follows. NADH-dependent reductase for dph3 and cytochrome b5. Required for the first step of diphthamide biosynthesis, a post-translational modification of histidine which occurs in elongation factor 2. Dph1 and dph2 transfer a 3-amino-3-carboxypropyl (ACP) group from S-adenosyl-L-methionine (SAM) to a histidine residue, the reaction is assisted by a reduction system comprising dph3 and a NADH-dependent reductase, predominantly cbr1. By reducing dph3, also involved in the formation of the tRNA wobble base modification mcm5s 2U (5-methoxycarbonylmethyl-2-thiouridine), mediated by the elongator complex. The cytochrome b5/NADH cytochrome b5 reductase electron transfer system supports the catalytic activity of several sterol biosynthetic enzymes. This chain is NADH-cytochrome b5 reductase 1 (cbr1), found in Aspergillus oryzae (strain ATCC 42149 / RIB 40) (Yellow koji mold).